The chain runs to 500 residues: NAD(P)H-quinone oxidoreductase chain 4, chloroplastic (500 aa).

Helical transmembrane passes span 4–24 (FPWLTIIVVLPIFAGSSIFFF), 35–55 (YTICICLLELLLTTYAFCYHF), 87–107 (IGPVLLTGFITTLATLAAWPV), 113–130 (LFHFLMLAMYSGQIGSFS), 134–154 (LLLFFIMWELELIPVYLLLSM), 167–187 (FILYTAGGSIFLLIGVSGMGL), 208–228 (ALEILLYFGFFIAYAVKLPII), 242–262 (HYSTCMLLAGILLKMGAYGLV), 272–292 (AHSIFSPWLMIVGTIQIIYAA), 305–325 (IAYSSVSHMGFTILGISSITD), 330–350 (GAILQMISHGFIGAALFFLAG), 386–406 (LALPGMSGFVAELVVFFGIIT), 416–436 (ILITFVTAIGMILTPIYSLSM), and 463–483 (FVSICIFLPVIGIGIYPDFVF).

It belongs to the complex I subunit 4 family.

The protein localises to the plastid. Its subcellular location is the chloroplast thylakoid membrane. It catalyses the reaction a plastoquinone + NADH + (n+1) H(+)(in) = a plastoquinol + NAD(+) + n H(+)(out). It carries out the reaction a plastoquinone + NADPH + (n+1) H(+)(in) = a plastoquinol + NADP(+) + n H(+)(out). The sequence is that of NAD(P)H-quinone oxidoreductase chain 4, chloroplastic from Nandina domestica (Heavenly bamboo).